A 91-amino-acid polypeptide reads, in one-letter code: Glycophorin-B (91 aa).

The first 19 residues, 1 to 19 (MYGKIIFVLLLSEIVSISA), serve as a signal peptide directing secretion. Residues 20–59 (LSTTEVAMHTSTSSSVTKSYISSQTNGETGQLVHRFTVPA) are Extracellular-facing. T36 is a glycosylation site (O-linked (GalNAc...) threonine). An O-linked (GalNAc...) serine glycan is attached at S38. The chain crosses the membrane as a helical span at residues 60 to 81 (PVVIILIILCVMAGIIGTILLI). Topologically, residues 82-91 (SYSIRRLIKA) are cytoplasmic.

This sequence belongs to the glycophorin-A family. As to quaternary structure, component of the ankyrin-1 complex in the erythrocyte, composed of ANK1, RHCE, RHAG, SLC4A1, EPB42, GYPA, GYPB and AQP1. Interacts (via the N-terminal) with RHAG; this interaction bridges the (RHAG)2(RHCE) heterotrimer with the SLC4A1 Band 3 I dimer complexed with GYPA. Post-translationally, the N-terminal extracellular domain is heavily glycosylated on serine and threonine residues.

It localises to the cell membrane. Component of the ankyrin-1 complex, a multiprotein complex involved in the stability and shape of the erythrocyte membrane. The polypeptide is Glycophorin-B (Homo sapiens (Human)).